Here is a 252-residue protein sequence, read N- to C-terminus: Cell division protein ZapD (252 aa).

The protein belongs to the ZapD family. Interacts with FtsZ.

The protein resides in the cytoplasm. Functionally, cell division factor that enhances FtsZ-ring assembly. Directly interacts with FtsZ and promotes bundling of FtsZ protofilaments, with a reduction in FtsZ GTPase activity. The polypeptide is Cell division protein ZapD (Dechloromonas aromatica (strain RCB)).